Here is a 253-residue protein sequence, read N- to C-terminus: 5'/3'-nucleotidase SurE (253 aa).

Residues D8, D9, S39, and N92 each contribute to the a divalent metal cation site.

Belongs to the SurE nucleotidase family. It depends on a divalent metal cation as a cofactor.

It localises to the cytoplasm. The enzyme catalyses a ribonucleoside 5'-phosphate + H2O = a ribonucleoside + phosphate. It carries out the reaction a ribonucleoside 3'-phosphate + H2O = a ribonucleoside + phosphate. The catalysed reaction is [phosphate](n) + H2O = [phosphate](n-1) + phosphate + H(+). Functionally, nucleotidase with a broad substrate specificity as it can dephosphorylate various ribo- and deoxyribonucleoside 5'-monophosphates and ribonucleoside 3'-monophosphates with highest affinity to 3'-AMP. Also hydrolyzes polyphosphate (exopolyphosphatase activity) with the preference for short-chain-length substrates (P20-25). Might be involved in the regulation of dNTP and NTP pools, and in the turnover of 3'-mononucleotides produced by numerous intracellular RNases (T1, T2, and F) during the degradation of various RNAs. The polypeptide is 5'/3'-nucleotidase SurE (Escherichia coli O127:H6 (strain E2348/69 / EPEC)).